The chain runs to 556 residues: Undecaprenyl phosphate-alpha-4-amino-4-deoxy-L-arabinose arabinosyl transferase (556 aa).

Transmembrane regions (helical) follow at residues 88-108 (FASV…AMML), 116-136 (LLAA…TYSV), 179-199 (FMTK…PVAL), 207-227 (LLLF…PWAL), 258-278 (APFW…LALL), 296-316 (FFLL…KGKL), 319-339 (YILP…SGLA), 355-375 (IVFG…IIVP), 384-404 (LTII…AVSL), and 410-430 (WGYL…GSIP).

The protein belongs to the glycosyltransferase 83 family.

The protein resides in the cell inner membrane. The catalysed reaction is 4-amino-4-deoxy-alpha-L-arabinopyranosyl di-trans,octa-cis-undecaprenyl phosphate + lipid IVA = lipid IIA + di-trans,octa-cis-undecaprenyl phosphate.. Its pathway is lipopolysaccharide metabolism; 4-amino-4-deoxy-beta-L-arabinose-lipid A biosynthesis. In terms of biological role, catalyzes the transfer of the L-Ara4N moiety of the glycolipid undecaprenyl phosphate-alpha-L-Ara4N to lipid A. The modified arabinose is attached to lipid A and is required for resistance to polymyxin and cationic antimicrobial peptides. This Pectobacterium atrosepticum (strain SCRI 1043 / ATCC BAA-672) (Erwinia carotovora subsp. atroseptica) protein is Undecaprenyl phosphate-alpha-4-amino-4-deoxy-L-arabinose arabinosyl transferase.